A 284-amino-acid chain; its full sequence is 2-dehydro-3-deoxyphosphooctonate aldolase (284 aa).

Belongs to the KdsA family.

The protein resides in the cytoplasm. It catalyses the reaction D-arabinose 5-phosphate + phosphoenolpyruvate + H2O = 3-deoxy-alpha-D-manno-2-octulosonate-8-phosphate + phosphate. Its pathway is carbohydrate biosynthesis; 3-deoxy-D-manno-octulosonate biosynthesis; 3-deoxy-D-manno-octulosonate from D-ribulose 5-phosphate: step 2/3. It participates in bacterial outer membrane biogenesis; lipopolysaccharide biosynthesis. The sequence is that of 2-dehydro-3-deoxyphosphooctonate aldolase from Actinobacillus succinogenes (strain ATCC 55618 / DSM 22257 / CCUG 43843 / 130Z).